Here is a 294-residue protein sequence, read N- to C-terminus: Segregation and condensation protein A (294 aa).

This sequence belongs to the ScpA family. Component of a cohesin-like complex composed of ScpA, ScpB and the Smc homodimer, in which ScpA and ScpB bind to the head domain of Smc. The presence of the three proteins is required for the association of the complex with DNA.

It is found in the cytoplasm. Participates in chromosomal partition during cell division. May act via the formation of a condensin-like complex containing Smc and ScpB that pull DNA away from mid-cell into both cell halves. This Ureaplasma parvum serovar 3 (strain ATCC 700970) protein is Segregation and condensation protein A.